The primary structure comprises 473 residues: Siroheme synthase (473 aa).

Positions 1-203 are precorrin-2 dehydrogenase /sirohydrochlorin ferrochelatase; sequence MTLFPIFADL…QQPGLAEQEL (203 aa). Residues 22–23 and 43–44 contribute to the NAD(+) site; these read AV and PR. Residue S128 is modified to Phosphoserine. The tract at residues 216-473 is uroporphyrinogen-III C-methyltransferase; the sequence is GSVVLVGAGP…GLPGPQALAA (258 aa). P225 serves as a coordination point for S-adenosyl-L-methionine. The Proton acceptor role is filled by D248. K270 functions as the Proton donor in the catalytic mechanism. S-adenosyl-L-methionine is bound by residues 302–304, I307, 332–333, M384, and G413; these read GGD and TA.

The protein in the N-terminal section; belongs to the precorrin-2 dehydrogenase / sirohydrochlorin ferrochelatase family. This sequence in the C-terminal section; belongs to the precorrin methyltransferase family.

It catalyses the reaction uroporphyrinogen III + 2 S-adenosyl-L-methionine = precorrin-2 + 2 S-adenosyl-L-homocysteine + H(+). The catalysed reaction is precorrin-2 + NAD(+) = sirohydrochlorin + NADH + 2 H(+). The enzyme catalyses siroheme + 2 H(+) = sirohydrochlorin + Fe(2+). It participates in cofactor biosynthesis; adenosylcobalamin biosynthesis; precorrin-2 from uroporphyrinogen III: step 1/1. It functions in the pathway cofactor biosynthesis; adenosylcobalamin biosynthesis; sirohydrochlorin from precorrin-2: step 1/1. The protein operates within porphyrin-containing compound metabolism; siroheme biosynthesis; precorrin-2 from uroporphyrinogen III: step 1/1. Its pathway is porphyrin-containing compound metabolism; siroheme biosynthesis; siroheme from sirohydrochlorin: step 1/1. It participates in porphyrin-containing compound metabolism; siroheme biosynthesis; sirohydrochlorin from precorrin-2: step 1/1. Its function is as follows. Multifunctional enzyme that catalyzes the SAM-dependent methylations of uroporphyrinogen III at position C-2 and C-7 to form precorrin-2 via precorrin-1. Then it catalyzes the NAD-dependent ring dehydrogenation of precorrin-2 to yield sirohydrochlorin. Finally, it catalyzes the ferrochelation of sirohydrochlorin to yield siroheme. This chain is Siroheme synthase, found in Bordetella parapertussis (strain 12822 / ATCC BAA-587 / NCTC 13253).